The following is a 185-amino-acid chain: Ribosome-recycling factor (185 aa).

This sequence belongs to the RRF family.

It localises to the cytoplasm. In terms of biological role, responsible for the release of ribosomes from messenger RNA at the termination of protein biosynthesis. May increase the efficiency of translation by recycling ribosomes from one round of translation to another. This Shewanella loihica (strain ATCC BAA-1088 / PV-4) protein is Ribosome-recycling factor.